The following is a 382-amino-acid chain: Gap junction alpha-1 protein (382 aa).

Residues 2–23 (GDWSALGKLLDKVQAYSTAGGK) are Cytoplasmic-facing. Position 5 is a phosphoserine (serine 5). A helical transmembrane segment spans residues 24-44 (VWLSVLFIFRILLLGTAVESA). Topologically, residues 45–76 (WGDEQSAFRCNTQQPGCENVCYDKSFPISHVR) are extracellular. 2 disulfide bridges follow: cysteine 54-cysteine 192 and cysteine 187-cysteine 198. A helical membrane pass occupies residues 77–97 (FWVLQIIFVSVPTLLYLAHVF). At 98–155 (YVMRKEEKLNKKEEELKVAQTDGVNVEMHLKQIEIKKFKYGIEEHGKVKMRGGLLRTY) the chain is on the cytoplasmic side. Residue lysine 144 forms a Glycyl lysine isopeptide (Lys-Gly) (interchain with G-Cter in SUMO) linkage. A helical transmembrane segment spans residues 156-176 (IISILFKSVFEVAFLLIQWYI). Over 177-207 (YGFSLSAVYTCKRDPCPHQVDCFLSRPTEKT) the chain is Extracellular. A helical membrane pass occupies residues 208-228 (IFIIFMLVVSLVSLALNIIEL). Residues 229-382 (FYVFFKGVKD…SRPRPDDLEI (154 aa)) are Cytoplasmic-facing. Lysine 237 is covalently cross-linked (Glycyl lysine isopeptide (Lys-Gly) (interchain with G-Cter in SUMO)). An interaction with NOV region spans residues 244 to 382 (SDPYHATTGP…SRPRPDDLEI (139 aa)). The residue at position 247 (tyrosine 247) is a Phosphotyrosine. Residues serine 255, serine 257, and serine 262 each carry the phosphoserine modification. The segment at 264–382 (KYAYFNGCSS…SRPRPDDLEI (119 aa)) is interaction with UBQLN4. Cysteine 271 is modified (S-nitrosocysteine). Threonine 275 carries the phosphothreonine modification. Residues serine 306, serine 314, and serine 325 each carry the phosphoserine modification. The segment covering 317–332 (QNRMGQAGSTISNSHA) has biased composition (polar residues). The disordered stretch occupies residues 317-382 (QNRMGQAGST…SRPRPDDLEI (66 aa)). The residue at position 326 (threonine 326) is a Phosphothreonine. 3 positions are modified to phosphoserine: serine 328, serine 330, and serine 365. Over residues 362–374 (RPSSRASSRASSR) the composition is skewed to low complexity. At serine 368 the chain carries Phosphoserine; by PKC/PRKCG and PKC/PRKCD. 2 positions are modified to phosphoserine: serine 369 and serine 373.

It belongs to the connexin family. Alpha-type (group II) subfamily. In terms of assembly, a connexon is composed of a hexamer of connexins. Interacts with SGSM3. Interacts with RIC1/CIP150. Interacts with CNST and CSNK1D. Interacts (via C-terminus) with TJP1. Interacts (via C-terminus) with SRC (via SH3 domain). Interacts (not ubiquitinated) with UBQLN4 (via UBA domain). Interacts with NOV. Interacts with TMEM65. Interacts with ANK3/ANKG and PKP2. Contains at least one intramolecular disulfide bond. Post-translationally, phosphorylation at Ser-325, Ser-328 and Ser-330 by CK1 modulates gap junction assembly. Phosphorylated at Ser-368 by PRKCG; phosphorylation induces disassembly of gap junction plaques and inhibition of gap junction activity. Phosphorylation at Ser-368 by PRKCD triggers its internalization into small vesicles leading to proteasome-mediated degradation. In terms of processing, sumoylated with SUMO1, SUMO2 and SUMO3, which may regulate the level of functional Cx43 gap junctions at the plasma membrane. May be desumoylated by SENP1 or SENP2. S-nitrosylation at Cys-271 is enriched at the muscle endothelial gap junction in arteries, it augments channel permeability and may regulate of smooth muscle cell to endothelial cell communication. Post-translationally, acetylated in the developing cortex; leading to delocalization from the cell membrane. Detected in ventricle and atrium (at protein level).

The protein localises to the cell membrane. Its subcellular location is the cell junction. It localises to the gap junction. It is found in the endoplasmic reticulum. Functionally, gap junction protein that acts as a regulator of bladder capacity. A gap junction consists of a cluster of closely packed pairs of transmembrane channels, the connexons, through which materials of low MW diffuse from one cell to a neighboring cell. Negative regulator of bladder functional capacity: acts by enhancing intercellular electrical and chemical transmission, thus sensitizing bladder muscles to cholinergic neural stimuli and causing them to contract. May play a role in cell growth inhibition through the regulation of NOV expression and localization. Plays an essential role in gap junction communication in the ventricles. The sequence is that of Gap junction alpha-1 protein (Gja1) from Rattus norvegicus (Rat).